The following is a 620-amino-acid chain: MRRSEVLAEESIVCLQKALNHLREIWELIGIPEDQRLQRTEVVKKHIKELLDMMIAEEESLKERLIKSISVCQKELNTLCSELHVEPFQEEGETTILQLEKDLRTQVELMRKQKKERKQELKLLQEQDQELCEILCMPHYDIDSASVPSLEELNQFRQHVTTLRETKASRREEFVSIKRQIILCMEALDHTPDTSFERDVVCEDEDAFCLSLENIATLQKLLRQLEMQKSQNEAVCEGLRTQIRELWDRLQIPEEEREAVATIMSGSKAKVRKALQLEVDRLEELKMQNMKKVIEAIRVELVQYWDQCFYSQEQRQAFAPFCAEDYTESLLQLHDAEIVRLKNYYEVHKELFEGVQKWEETWRLFLEFERKASDPNRFTNRGGNLLKEEKQRAKLQKMLPKLEEELKARIELWEQEHSKAFMVNGQKFMEYVAEQWEMHRLEKERAKQERQLKNKKQTETEMLYGSAPRTPSKRRGLAPNTPGKARKLNTTTMSNATANSSIRPIFGGTVYHSPVSRLPPSGSKPVAASTCSGKKTPRTGRHGANKENLELNGSILSGGYPGSAPLQRNFSINSVASTYSEFAKDPSLSDSSTVGLQRELSKASKSDATSGILNSTNIQS.

Residues 1 to 303 (MRRSEVLAEE…IEAIRVELVQ (303 aa)) form a required for the interaction with KIF4A region. Positions 1–341 (MRRSEVLAEE…QLHDAEIVRL (341 aa)) are dimerization. Coiled coils occupy residues 96-133 (ILQL…ELCE), 211-304 (SLEN…LVQY), and 383-463 (GNLL…TEML). The spectrin-fold stretch occupies residues 342–466 (KNYYEVHKEL…QTETEMLYGS (125 aa)). Basic and acidic residues predominate over residues 446-459 (AKQERQLKNKKQTE). Residues 446–488 (AKQERQLKNKKQTETEMLYGSAPRTPSKRRGLAPNTPGKARKL) are disordered. The interval 467-620 (APRTPSKRRG…GILNSTNIQS (154 aa)) is unstructured, Arg/Lys rich. T470 and T481 each carry phosphothreonine; by CDK1. A phosphoserine mark is found at S513, R541, and S571. Positions 517–545 (RLPPSGSKPVAASTCSGKKTPRTGRHGAN) are disordered. Residue T578 is modified to Phosphothreonine. The segment at 600–620 (LSKASKSDATSGILNSTNIQS) is disordered. Polar residues predominate over residues 606–620 (SDATSGILNSTNIQS). Residue T616 is modified to Phosphothreonine; by PLK1.

It belongs to the MAP65/ASE1 family. As to quaternary structure, homodimer. Interacts with the C-terminal Rho-GAP domain and the basic region of RACGAP1. The interaction with RACGAP1 inhibits its GAP activity towards CDC42 in vitro, which may be required for maintaining normal spindle morphology. Interacts (via N-terminus) with the C-terminus of CENPE (via C-terminus); the interaction occurs during late mitosis. Interacts (via N-terminus) with KIF4A (via C-terminus); the interaction is required for the progression of mitosis. Interacts (via N-terminus) with KIF23 (via C-terminus); the interaction occurs during late mitosis. Interacts with KIF14 and KIF20A. Interacts with PLK1. Interacts with KIF20B. Interacts with CCDC66. In terms of processing, phosphorylation by CDK1 in early mitosis holds PRC1 in an inactive monomeric state, during the metaphase to anaphase transition, PRC1 is dephosphorylated, promoting interaction with KIF4A, which then translocates PRC1 along mitotic spindles to the plus ends of antiparallel interdigitating microtubules. Dephosphorylation also promotes MT-bundling activity by allowing dimerization. Phosphorylation by CDK1 prevents PLK1-binding: upon degradation of CDK1 at anaphase and dephosphorylation, it is then phosphorylated by PLK1, leading to cytokinesis. In terms of tissue distribution, overexpressed in bladder cancer cells.

The protein localises to the nucleus. Its subcellular location is the cytoplasm. The protein resides in the cytoskeleton. It localises to the spindle pole. It is found in the midbody. The protein localises to the chromosome. Functionally, key regulator of cytokinesis that cross-links antiparrallel microtubules at an average distance of 35 nM. Essential for controlling the spatiotemporal formation of the midzone and successful cytokinesis. Required for KIF14 localization to the central spindle and midbody. Required to recruit PLK1 to the spindle. Stimulates PLK1 phosphorylation of RACGAP1 to allow recruitment of ECT2 to the central spindle. Acts as an oncogene for promoting bladder cancer cells proliferation, apoptosis inhibition and carcinogenic progression. In Homo sapiens (Human), this protein is Protein regulator of cytokinesis 1.